Reading from the N-terminus, the 304-residue chain is Large ribosomal subunit protein uL18z (304 aa).

Positions 285-304 (LNALNSSAGADDDDEEEDDE) are disordered. Residues 294 to 304 (ADDDDEEEDDE) are compositionally biased toward acidic residues.

The protein belongs to the universal ribosomal protein uL18 family. Component of the large ribosomal subunit (LSU).

The protein localises to the cytoplasm. The protein resides in the nucleus. Its function is as follows. Component of the ribosome, a large ribonucleoprotein complex responsible for the synthesis of proteins in the cell. The small ribosomal subunit (SSU) binds messenger RNAs (mRNAs) and translates the encoded message by selecting cognate aminoacyl-transfer RNA (tRNA) molecules. The large subunit (LSU) contains the ribosomal catalytic site termed the peptidyl transferase center (PTC), which catalyzes the formation of peptide bonds, thereby polymerizing the amino acids delivered by tRNAs into a polypeptide chain. The nascent polypeptides leave the ribosome through a tunnel in the LSU and interact with protein factors that function in enzymatic processing, targeting, and the membrane insertion of nascent chains at the exit of the ribosomal tunnel. This is Large ribosomal subunit protein uL18z (RPL5A) from Oryza sativa subsp. japonica (Rice).